Reading from the N-terminus, the 147-residue chain is Large ribosomal subunit protein bL9 (147 aa).

Belongs to the bacterial ribosomal protein bL9 family.

In terms of biological role, binds to the 23S rRNA. The polypeptide is Large ribosomal subunit protein bL9 (Gemmatimonas aurantiaca (strain DSM 14586 / JCM 11422 / NBRC 100505 / T-27)).